A 590-amino-acid chain; its full sequence is Putative ABC transporter ATP-binding protein MM_3016 (590 aa).

2 ABC transporter domains span residues 11 to 251 (VRFE…KLGI) and 317 to 550 (VRIE…AGLI). ATP is bound by residues 45-52 (GPSGCGKS) and 350-357 (GHNGAGKT).

Belongs to the ABC transporter superfamily.

The protein localises to the cell membrane. Its function is as follows. Probably part of an ABC transporter complex. Responsible for energy coupling to the transport system. This is Putative ABC transporter ATP-binding protein MM_3016 from Methanosarcina mazei (strain ATCC BAA-159 / DSM 3647 / Goe1 / Go1 / JCM 11833 / OCM 88) (Methanosarcina frisia).